The following is a 291-amino-acid chain: Protease HtpX homolog (291 aa).

Helical transmembrane passes span 4-24 and 38-58; these read IALFLITNLAVMAVLGITASL and LGALLGFAMVMGFGGAFISLL. Position 144 (His144) interacts with Zn(2+). Glu145 is a catalytic residue. Residue His148 participates in Zn(2+) binding. Transmembrane regions (helical) follow at residues 159 to 179 and 197 to 217; these read LIQGVMNTFVVFLSRAIGYFI and VTTVVLDLLLGLVAAMIVAWF. Glu222 is a Zn(2+) binding site.

Belongs to the peptidase M48B family. Zn(2+) serves as cofactor.

The protein localises to the cell inner membrane. This chain is Protease HtpX homolog, found in Leptothrix cholodnii (strain ATCC 51168 / LMG 8142 / SP-6) (Leptothrix discophora (strain SP-6)).